A 483-amino-acid polypeptide reads, in one-letter code: MGKKLKYTKFQLRSNVVKPNICMSLTTDIAGEAKLKDLERQKKGDARTVVAIILGGGAGTRLFPLTKRRAKPAVPMGGAYRLIDVPMSNCINSGINKVYILTQFNSASLNRHIARAYNFGNGVTFESGYVEVLAATQTPGELGKRWFQGTAHAVRQFHWLFEDARSKDIEDVLILSGDHLYRMDYLHFVQSHRQSGADITISSLPIDDSRASDFGLMKIDDTGRVMSFSEKPKGDDLKAMAVDTTVLGLSPEEAKEKPYIASIGKVYVFKKDILLNLLRWRFPTANDFGSEIIPASTKEFCVKAYLFNDYWEDIGTIRSFFRANLALTEHPPRFSFYDATKPIYTSRRNLPPSAIDNSKIVDSIVSHGIFLTNCFVEHSVVGIRSRIGTNVHLKDTVMLGADYYETDAEIRSQLAEGKVPLGIGENTRIKDCIIDKNARIGKNVVIANSEGVQEADRSSEGFYMASGITVISKNSTIPDGTVI.

The protein belongs to the bacterial/plant glucose-1-phosphate adenylyltransferase family. As to quaternary structure, heterotetramer. In terms of tissue distribution, tubers.

It localises to the plastid. Its subcellular location is the chloroplast. The protein resides in the amyloplast. The enzyme catalyses alpha-D-glucose 1-phosphate + ATP + H(+) = ADP-alpha-D-glucose + diphosphate. It participates in glycan biosynthesis; starch biosynthesis. With respect to regulation, activated by 3'phosphoglycerate, inhibited by orthophosphate. Allosteric regulation. Functionally, this protein plays a role in synthesis of starch. It catalyzes the synthesis of the activated glycosyl donor, ADP-glucose from Glc-1-P and ATP. The chain is Glucose-1-phosphate adenylyltransferase large subunit 3, chloroplastic/amyloplastic (AGPS3) from Solanum tuberosum (Potato).